The sequence spans 534 residues: Cyclin-L1 (534 aa).

Cyclin-like regions lie at residues 94–196 and 209–293; these read ELIQ…RVLK and KIIV…KILQ. The tract at residues 327 to 534 is disordered; it reads LPEGAPVLDN…DHPGHSRHRR (208 aa). Residues 389–399 are compositionally biased toward basic and acidic residues; that stretch reads KGRESRSRSGS. Composition is skewed to low complexity over residues 400 to 412 and 437 to 453; these read RDQS…SRSA and RSGS…TYKS. The interval 400–436 is RS; that stretch reads RDQSYSRSPSRSASPKHRKSESYSTSSGSKSHSRSRS. The segment covering 468–485 has biased composition (basic residues); that stretch reads SAHKARKSRSRSSSRSRS. A compositionally biased stretch (basic and acidic residues) spans 486-495; sequence RSRERSDHSG. A compositionally biased stretch (basic residues) spans 496–511; sequence KYKKKSHYYRNHRHER. Over residues 512–528 the composition is skewed to basic and acidic residues; it reads SRSYERASHRYDRDHPG.

It belongs to the cyclin family. Cyclin L subfamily.

The protein localises to the nucleus speckle. The protein resides in the nucleus. Its subcellular location is the nucleoplasm. Its function is as follows. Involved in pre-mRNA splicing. The sequence is that of Cyclin-L1 (CCNL1) from Gallus gallus (Chicken).